The sequence spans 211 residues: Large ribosomal subunit protein uL3 (211 aa).

This sequence belongs to the universal ribosomal protein uL3 family. Part of the 50S ribosomal subunit. Forms a cluster with proteins L14 and L19.

In terms of biological role, one of the primary rRNA binding proteins, it binds directly near the 3'-end of the 23S rRNA, where it nucleates assembly of the 50S subunit. The chain is Large ribosomal subunit protein uL3 from Desulfatibacillum aliphaticivorans.